The chain runs to 332 residues: 2-oxoglutarate-dependent dioxygenase FG08081 (332 aa).

The Fe2OG dioxygenase domain occupies R176 to A280. Positions 201, 203, and 258 each coordinate Fe cation. Residue R271 participates in 2-oxoglutarate binding.

The protein belongs to the iron/ascorbate-dependent oxidoreductase family. The cofactor is Fe(2+).

Its pathway is mycotoxin biosynthesis. Functionally, 2-oxoglutarate-dependent dioxygenase; part of the gene cluster that mediates the biosynthesis of butenolide, a mycotoxin that shows antibiotic activity but does not seem to play a major role in the spread of head blight in wheat. Butenolide is derived from glutamic acid via a 4-acetamido-2-butenoic acid intermediate. The predicted function of the NADH:flavin oxidoreductase FG08077, the cytochrome P450 monooxygenase FG08079, the decarboxylase FG08083, and the putative acetyltransferase FG08082 are consistent with this pathway, however, the respective activities of the butelonide biosynthesis cluster enzymes have still to be experimentally determined. The protein is 2-oxoglutarate-dependent dioxygenase FG08081 of Gibberella zeae (strain ATCC MYA-4620 / CBS 123657 / FGSC 9075 / NRRL 31084 / PH-1) (Wheat head blight fungus).